The sequence spans 139 residues: Small ribosomal subunit protein bS6 (139 aa).

The protein belongs to the bacterial ribosomal protein bS6 family.

Its function is as follows. Binds together with bS18 to 16S ribosomal RNA. The sequence is that of Small ribosomal subunit protein bS6 from Borreliella afzelii (strain PKo) (Borrelia afzelii).